The following is a 464-amino-acid chain: Glutamate--tRNA ligase (464 aa).

The short motif at Pro9–Gly19 is the 'HIGH' region element. Residues Lys242 to Arg246 carry the 'KMSKS' region motif. Residue Lys245 participates in ATP binding.

It belongs to the class-I aminoacyl-tRNA synthetase family. Glutamate--tRNA ligase type 1 subfamily. Monomer.

The protein localises to the cytoplasm. The enzyme catalyses tRNA(Glu) + L-glutamate + ATP = L-glutamyl-tRNA(Glu) + AMP + diphosphate. Its function is as follows. Catalyzes the attachment of glutamate to tRNA(Glu) in a two-step reaction: glutamate is first activated by ATP to form Glu-AMP and then transferred to the acceptor end of tRNA(Glu). The polypeptide is Glutamate--tRNA ligase (Neisseria meningitidis serogroup A / serotype 4A (strain DSM 15465 / Z2491)).